Reading from the N-terminus, the 430-residue chain is N-lysine methyltransferase SMYD2-A (430 aa).

One can recognise an SET domain in the interval 5-239 (EGLERFDSPG…AGDEVFTSYI (235 aa)). An S-adenosyl-L-methionine-binding site is contributed by 15 to 17 (KGR). Cys50, Cys53, Cys63, Cys66, Cys72, Cys76, His84, and Cys88 together coordinate Zn(2+). An MYND-type zinc finger spans residues 50-88 (CDFCFARKEGLSKCGKCKQAFYCNVDCQKGDWPMHKLEC). S-adenosyl-L-methionine-binding positions include His135, 204–205 (NH), and 256–258 (YFF).

Belongs to the class V-like SAM-binding methyltransferase superfamily.

It localises to the cytoplasm. The protein localises to the cytosol. The protein resides in the nucleus. The enzyme catalyses L-lysyl(4)-[histone H3] + 3 S-adenosyl-L-methionine = N(6),N(6),N(6)-trimethyl-L-lysyl(4)-[histone H3] + 3 S-adenosyl-L-homocysteine + 3 H(+). It carries out the reaction L-lysyl-[protein] + S-adenosyl-L-methionine = N(6)-methyl-L-lysyl-[protein] + S-adenosyl-L-homocysteine + H(+). Protein-lysine N-methyltransferase that methylates both histones and non-histone proteins, including p53/TP53 and RB1. Specifically trimethylates histone H3 'Lys-4' (H3K4me3) in vivo. The activity requires interaction with HSP90alpha. Shows even higher methyltransferase activity on p53/TP53. Monomethylates 'Lys-370' of p53/TP53, leading to decreased DNA-binding activity and subsequent transcriptional regulation activity of p53/TP53. Monomethylates RB1 at 'Lys-860'. The chain is N-lysine methyltransferase SMYD2-A (smyd2-a) from Xenopus laevis (African clawed frog).